Here is a 647-residue protein sequence, read N- to C-terminus: Exoribonuclease 2 (647 aa).

Residues 192–519 form the RNB domain; it reads RIDLTSLDFV…NHRLLKAIIQ (328 aa). In terms of domain architecture, S1 motif spans 564 to 646; that stretch reads EQRFTAEIID…ETRNIVARPT (83 aa).

Belongs to the RNR ribonuclease family. RNase II subfamily.

It localises to the cytoplasm. The enzyme catalyses Exonucleolytic cleavage in the 3'- to 5'-direction to yield nucleoside 5'-phosphates.. Functionally, involved in mRNA degradation. Hydrolyzes single-stranded polyribonucleotides processively in the 3' to 5' direction. This Photorhabdus laumondii subsp. laumondii (strain DSM 15139 / CIP 105565 / TT01) (Photorhabdus luminescens subsp. laumondii) protein is Exoribonuclease 2.